The chain runs to 66 residues: MAFLKKSLFLVLFLGLVSLSICEEEKRETEEEEHDQEEDDKSEEKRFLSLIPHIVSGVASIAKHFG.

Residues 1 to 22 (MAFLKKSLFLVLFLGLVSLSIC) form the signal peptide. Positions 23 to 46 (EEEKRETEEEEHDQEEDDKSEEKR) are excised as a propeptide. The interval 25-44 (EKRETEEEEHDQEEDDKSEE) is disordered. Over residues 30-41 (EEEEHDQEEDDK) the composition is skewed to acidic residues. Phe65 is modified (phenylalanine amide).

In terms of tissue distribution, expressed by the skin glands.

The protein resides in the secreted. Its subcellular location is the target cell membrane. Functionally, antimicrobial peptide with high activity against Gram-positive bacteria, low activity against Gram-negative bacteria, and moderate activity against fungi. Acts on bacterial biofilms (S.aureus) with the same potency than on bacteria. Acts by causing bacterial membrane disruption inducing leakage of the intracellular content followed by cell death. It adopts an alpha-helical amphipathic structure in membrane environments. Also shows highly potent antiparasitic activity against Leishmania species. Shows low hemolytic activity on horse and human erythrocytes (LC(50)=39 uM). Is also active on human monocytes (IC(50)=23 uM). This Phyllomedusa sauvagei (Sauvage's leaf frog) protein is Phylloseptin-S1.